Here is a 334-residue protein sequence, read N- to C-terminus: Fructose-1,6-bisphosphatase class 1 (334 aa).

Mg(2+)-binding residues include Glu90, Asp113, Leu115, and Asp116. Substrate contacts are provided by residues Asp116–Ser119, Asn209, Tyr242, and Lys272. Glu278 provides a ligand contact to Mg(2+).

The protein belongs to the FBPase class 1 family. As to quaternary structure, homotetramer. Mg(2+) is required as a cofactor.

It is found in the cytoplasm. The catalysed reaction is beta-D-fructose 1,6-bisphosphate + H2O = beta-D-fructose 6-phosphate + phosphate. The protein operates within carbohydrate biosynthesis; gluconeogenesis. In Actinobacillus pleuropneumoniae serotype 7 (strain AP76), this protein is Fructose-1,6-bisphosphatase class 1.